The chain runs to 644 residues: DNA mismatch repair protein MutL (644 aa).

The disordered stretch occupies residues 363–405; it reads GTFNPFTDDKTNQHYTKAGSGSGSGYSSGSSSSSGSGSGSSYS. Positions 389 to 405 are enriched in low complexity; the sequence is SSGSSSSSGSGSGSSYS.

It belongs to the DNA mismatch repair MutL/HexB family.

Functionally, this protein is involved in the repair of mismatches in DNA. It is required for dam-dependent methyl-directed DNA mismatch repair. May act as a 'molecular matchmaker', a protein that promotes the formation of a stable complex between two or more DNA-binding proteins in an ATP-dependent manner without itself being part of a final effector complex. This Flavobacterium johnsoniae (strain ATCC 17061 / DSM 2064 / JCM 8514 / BCRC 14874 / CCUG 350202 / NBRC 14942 / NCIMB 11054 / UW101) (Cytophaga johnsonae) protein is DNA mismatch repair protein MutL.